The chain runs to 483 residues: Deoxyribodipyrimidine photo-lyase (483 aa).

A Photolyase/cryptochrome alpha/beta domain is found at 2–136; the sequence is QKNLIWFRND…LVKGFHDNLL (135 aa). (6R)-5,10-methylene-5,6,7,8-tetrahydrofolate is bound by residues Asn109 and Glu110. FAD is bound at residue Tyr225. Position 229 (Arg229) interacts with DNA. 237-241 provides a ligand contact to FAD; sequence TSMLS. Interaction with DNA stretches follow at residues 278–285 and 345–346; these read QILWREFY and NR. 376 to 378 is an FAD binding site; sequence DGD. Residue Gln408 participates in DNA binding.

The protein belongs to the DNA photolyase class-1 family. In terms of assembly, monomer. It depends on FAD as a cofactor. Requires (6R)-5,10-methylene-5,6,7,8-tetrahydrofolate as cofactor.

It catalyses the reaction cyclobutadipyrimidine (in DNA) = 2 pyrimidine residues (in DNA).. Functionally, involved in repair of UV radiation-induced DNA damage. Catalyzes the light-dependent monomerization (300-600 nm) of cyclobutyl pyrimidine dimers (in cis-syn configuration), which are formed between adjacent bases on the same DNA strand upon exposure to ultraviolet radiation. In Buchnera aphidicola subsp. Acyrthosiphon pisum (strain APS) (Acyrthosiphon pisum symbiotic bacterium), this protein is Deoxyribodipyrimidine photo-lyase (phrB).